The following is a 205-amino-acid chain: Guanylate kinase (205 aa).

Residues 19-197 (PKLFTISAPA…AYRVLKSIFI (179 aa)) form the Guanylate kinase-like domain. 26–33 (APAGVGKT) contributes to the ATP binding site.

This sequence belongs to the guanylate kinase family.

The protein localises to the cytoplasm. The enzyme catalyses GMP + ATP = GDP + ADP. In terms of biological role, essential for recycling GMP and indirectly, cGMP. The protein is Guanylate kinase (gmk) of Chlamydia pneumoniae (Chlamydophila pneumoniae).